The sequence spans 268 residues: Photosystem II 22 kDa protein 1, chloroplastic (268 aa).

The N-terminal 60 residues, 1 to 60, are a transit peptide targeting the chloroplast; that stretch reads MAQSMLVSGANGTVAAASTSRLQPVRPTPFSRLVLSQPSSSLGRAVSVKTVALFGRSKTK. 2 consecutive repeat copies span residues 54 to 161 and 164 to 268. The next 4 helical transmembrane spans lie at 99 to 119, 133 to 153, 199 to 219, and 234 to 254; these read VAML…KGIL, AEPL…GALG, LFVG…EIIT, and PINE…IAAI.

It belongs to the ELIP/psbS family. Expressed at low levels in leaves (at protein level).

It localises to the plastid. It is found in the chloroplast thylakoid membrane. Its function is as follows. Involved in high light-mediated energy-dependent nonphotochemical quenching (NPQ, qE) and thermal dissipation (TD) thus regulating energy conversion in photosystem II and protecting from photoinhibition. Also seems to regulate quantum yield of electron transport in fluctuating light conditions. The polypeptide is Photosystem II 22 kDa protein 1, chloroplastic (Oryza sativa subsp. indica (Rice)).